The sequence spans 354 residues: Putative Xaa-Pro aminopeptidase (354 aa).

Mn(2+) is bound by residues aspartate 213, aspartate 224, histidine 290, glutamate 319, and glutamate 333.

This sequence belongs to the peptidase M24B family. Mn(2+) serves as cofactor.

The catalysed reaction is Release of any N-terminal amino acid, including proline, that is linked to proline, even from a dipeptide or tripeptide.. The polypeptide is Putative Xaa-Pro aminopeptidase (pepP) (Mycoplasma pneumoniae (strain ATCC 29342 / M129 / Subtype 1) (Mycoplasmoides pneumoniae)).